Consider the following 499-residue polypeptide: Potassium voltage-gated channel subfamily A member 2 (499 aa).

Positions 1 to 26 (MTVATEDPADEAAALPGHPQDTYDPE) are disordered. Residues 1–125 (MTVATEDPAD…YELGEEAMEM (125 aa)) form a tetramerization domain region. Topologically, residues 1-160 (MTVATEDPAD…LLFEYPESSG (160 aa)) are cytoplasmic. A helical transmembrane segment spans residues 161–182 (PARIIAIVSVMVILISIVSFCL). Topologically, residues 183-221 (ETLPIFRDENEDMHGSGMTFHTYSNSTAGYQQSTSFTDP) are extracellular. N-linked (GlcNAc...) asparagine glycosylation is present at Asn-207. Residues 222–243 (FFIVETLCIIWFSFEFLVRFFA) form a helical membrane-spanning segment. The S-palmitoyl cysteine moiety is linked to residue Cys-244. The Cytoplasmic segment spans residues 244-254 (CPSKAGFFTNI). A helical transmembrane segment spans residues 255–275 (MNIIDIVAIIPYFITLGTELA). Residues 276 to 289 (EKPEDAQQGQQAMS) are Extracellular-facing. Residues 290 to 310 (LAILRVIRLVRVFRIFKLSRH) traverse the membrane as a helical; Voltage-sensor segment. Topologically, residues 311–325 (SKGLQILGQTLKASM) are cytoplasmic. Residues 312–325 (KGLQILGQTLKASM) are S4-S5 linker. The helical transmembrane segment at 326–347 (RELGLLIFFLFIGVILFSSAVY) threads the bilayer. Over 348 to 361 (FAEADERDSQFPSI) the chain is Extracellular. The helical intramembrane region spans 362–373 (PDAFWWAVVSMT). The Selectivity filter motif lies at 374–379 (TVGYGD). The stretch at 374 to 381 (TVGYGDMV) is an intramembrane region. Residues 382–388 (PTTIGGK) lie on the Extracellular side of the membrane. Residues 389–417 (IVGSLCAIAGVLTIALPVPVIVSNFNYFY) traverse the membrane as a helical segment. Over 418–499 (HRETEGEEQA…VNITKMLTDV (82 aa)) the chain is Cytoplasmic. Phosphotyrosine is present on Tyr-429. Phosphoserine occurs at positions 434, 440, 441, and 449. Position 458 is a phosphotyrosine (Tyr-458). The residue at position 468 (Ser-468) is a Phosphoserine. The PDZ-binding signature appears at 497-499 (TDV).

This sequence belongs to the potassium channel family. A (Shaker) (TC 1.A.1.2) subfamily. Kv1.2/KCNA2 sub-subfamily. In terms of assembly, homotetramer and heterotetramer with other channel-forming alpha subunits, such as KCNA1, KCNA4, KCNA5, KCNA6 and KCNA7. Channel activity is regulated by interaction with the beta subunits, including KCNAB1 and KCNAB2. Identified in a complex with KCNA1 and KCNAB2. Identified in a complex with KCNA4 and FYN. Identified in a complex with KCNA5 and KCNAB1. Interacts with the beta subunit KCNAB1. Interacts with PTK2B. Interacts (via C-terminus) with CTTN. Interacts (via N-terminal cytoplasmic domain) with RHOA (GTP-bound form); this regulates channel activity by reducing location at the cell surface in response to CHRM1 activation. Interacts with DRD2. Interacts with SIGMAR1; cocaine consumption leads to increased interaction. Interacts with ADAM22. Interacts with CNTNAP2. Interacts (via C-terminus) with the PDZ domains of DLG1, DLG2 and DLG4. Interacts with ADAM11. Interacts with LYNX1. Phosphorylated on tyrosine residues; phosphorylation increases in response to ischemia. Phosphorylated on tyrosine residues by activated PTK2B/PYK2. Phosphorylation on tyrosine residues suppresses ion channel activity. Phosphorylated on tyrosine residues in response to CHRM1 activation; this abolishes interaction with CTTN. This is probably due to endocytosis of the phosphorylated channel subunits. Phosphorylated on serine residues in response to increased cAMP levels; phosphorylation is apparently not catalyzed by PKA. Post-translationally, N-glycosylated, with complex, sialylated N-glycans. As to expression, detected in portal vein myocytes (at protein level). Detected in portal vein. Brain, liver and kidney.

It localises to the cell membrane. The protein resides in the membrane. The protein localises to the cell projection. It is found in the axon. Its subcellular location is the synapse. It localises to the presynaptic cell membrane. The protein resides in the synaptosome. The protein localises to the endoplasmic reticulum membrane. It is found in the dendrite. Its subcellular location is the lamellipodium membrane. It localises to the cell junction. The protein resides in the paranodal septate junction. The catalysed reaction is K(+)(in) = K(+)(out). Its activity is regulated as follows. Inhibited by 4-aminopyridine (4-AP). Inhibited by dendrotoxin (DTX) and charybdotoxin (CTX), but not by tetraethylammonium (TEA). Inhibited by tityustoxin-K alpha (TsTX-Kalpha), a toxin that is highly specific for KCNA2. Inhibited by maurotoxin. Inhibited by kappaM conotoxins kappaM-RIIIJ and kappaM-RIIIK. Its function is as follows. Voltage-gated potassium channel that mediates transmembrane potassium transport in excitable membranes, primarily in the brain and the central nervous system, but also in the cardiovascular system. Prevents aberrant action potential firing and regulates neuronal output. Forms tetrameric potassium-selective channels through which potassium ions pass in accordance with their electrochemical gradient. The channel alternates between opened and closed conformations in response to the voltage difference across the membrane. Can form functional homotetrameric channels and heterotetrameric channels that contain variable proportions of KCNA1, KCNA2, KCNA4, KCNA5, KCNA6, KCNA7, and possibly other family members as well; channel properties depend on the type of alpha subunits that are part of the channel. Channel properties are modulated by cytoplasmic beta subunits that regulate the subcellular location of the alpha subunits and promote rapid inactivation of delayed rectifier potassium channels. In vivo, membranes probably contain a mixture of heteromeric potassium channel complexes, making it difficult to assign currents observed in intact tissues to any particular potassium channel family member. Homotetrameric KCNA2 forms a delayed-rectifier potassium channel that opens in response to membrane depolarization, followed by slow spontaneous channel closure. In contrast, a heteromultimer formed by KCNA2 and KCNA4 shows rapid inactivation. Regulates neuronal excitability and plays a role as pacemaker in the regulation of neuronal action potentials. KCNA2-containing channels play a presynaptic role and prevent hyperexcitability and aberrant action potential firing. Response to toxins that are selective for KCNA2-containing potassium channels suggests that in Purkinje cells, dendritic subthreshold KCNA2-containing potassium channels prevent random spontaneous calcium spikes, suppressing dendritic hyperexcitability without hindering the generation of somatic action potentials, and thereby play an important role in motor coordination. Plays a role in the induction of long-term potentiation of neuron excitability in the CA3 layer of the hippocampus. May function as down-stream effector for G protein-coupled receptors and inhibit GABAergic inputs to basolateral amygdala neurons. May contribute to the regulation of neurotransmitter release, such as gamma-aminobutyric acid (GABA). Contributes to the regulation of the axonal release of the neurotransmitter dopamine. Reduced KCNA2 expression plays a role in the perception of neuropathic pain after peripheral nerve injury, but not acute pain. Plays a role in the regulation of the time spent in non-rapid eye movement (NREM) sleep. The sequence is that of Potassium voltage-gated channel subfamily A member 2 (KCNA2) from Oryctolagus cuniculus (Rabbit).